We begin with the raw amino-acid sequence, 119 residues long: NADH-quinone oxidoreductase subunit A (119 aa).

The next 3 membrane-spanning stretches (helical) occupy residues 7–27 (FPVL…MFLG), 63–83 (LIAI…PWGV), and 88–108 (IGWL…VGFV).

The protein belongs to the complex I subunit 3 family. As to quaternary structure, NDH-1 is composed of 14 different subunits. Subunits NuoA, H, J, K, L, M, N constitute the membrane sector of the complex.

It localises to the cell inner membrane. It catalyses the reaction a quinone + NADH + 5 H(+)(in) = a quinol + NAD(+) + 4 H(+)(out). NDH-1 shuttles electrons from NADH, via FMN and iron-sulfur (Fe-S) centers, to quinones in the respiratory chain. The immediate electron acceptor for the enzyme in this species is believed to be ubiquinone. Couples the redox reaction to proton translocation (for every two electrons transferred, four hydrogen ions are translocated across the cytoplasmic membrane), and thus conserves the redox energy in a proton gradient. This Polynucleobacter necessarius subsp. necessarius (strain STIR1) protein is NADH-quinone oxidoreductase subunit A.